Reading from the N-terminus, the 105-residue chain is Heat shock protein HspQ (105 aa).

Residues 74–105 (SSELQDERPEQPSMDELAQTIRKQRQAPRLRN) are disordered. Residues 95-105 (RKQRQAPRLRN) show a composition bias toward basic residues.

It belongs to the HspQ family.

The protein resides in the cytoplasm. Its function is as follows. Involved in the degradation of certain denaturated proteins, including DnaA, during heat shock stress. The chain is Heat shock protein HspQ from Shigella dysenteriae serotype 1 (strain Sd197).